Consider the following 120-residue polypeptide: Chaperonin GroEL (120 aa).

23 to 27 (DGTTT) is a binding site for ATP.

It belongs to the chaperonin (HSP60) family. In terms of assembly, forms a cylinder of 14 subunits composed of two heptameric rings stacked back-to-back. Interacts with the co-chaperonin GroES.

The protein resides in the cytoplasm. It catalyses the reaction ATP + H2O + a folded polypeptide = ADP + phosphate + an unfolded polypeptide.. In terms of biological role, together with its co-chaperonin GroES, plays an essential role in assisting protein folding. The GroEL-GroES system forms a nano-cage that allows encapsulation of the non-native substrate proteins and provides a physical environment optimized to promote and accelerate protein folding. This is Chaperonin GroEL from Mycolicibacterium chitae (Mycobacterium chitae).